A 317-amino-acid polypeptide reads, in one-letter code: Acetyl-coenzyme A carboxylase carboxyl transferase subunit alpha (317 aa).

The region spanning lysine 39 to alanine 293 is the CoA carboxyltransferase C-terminal domain.

The protein belongs to the AccA family. As to quaternary structure, acetyl-CoA carboxylase is a heterohexamer composed of biotin carboxyl carrier protein (AccB), biotin carboxylase (AccC) and two subunits each of ACCase subunit alpha (AccA) and ACCase subunit beta (AccD).

The protein localises to the cytoplasm. It catalyses the reaction N(6)-carboxybiotinyl-L-lysyl-[protein] + acetyl-CoA = N(6)-biotinyl-L-lysyl-[protein] + malonyl-CoA. It functions in the pathway lipid metabolism; malonyl-CoA biosynthesis; malonyl-CoA from acetyl-CoA: step 1/1. Functionally, component of the acetyl coenzyme A carboxylase (ACC) complex. First, biotin carboxylase catalyzes the carboxylation of biotin on its carrier protein (BCCP) and then the CO(2) group is transferred by the carboxyltransferase to acetyl-CoA to form malonyl-CoA. The sequence is that of Acetyl-coenzyme A carboxylase carboxyl transferase subunit alpha from Beijerinckia indica subsp. indica (strain ATCC 9039 / DSM 1715 / NCIMB 8712).